We begin with the raw amino-acid sequence, 381 residues long: MSDDKKSDDYRVDMPSSRTSRAPSPIMRPALKSAPSLTENPMAAVLAYCASSILMTVTNKYVLSGVDFNLNFFLLCVQSVVCVTAISICKAAGLITYRDFNTDEAKKWFPISLLLIGMIYTGTWALKYLSIPVYTIFKNLTIILIAYGEVLWFGGSVTPMTLFSFGLMVLSSIIAAWADIQHALNSFGQQSEAANEALSTMHAGYLWMAFNCVCSATYLLSMRKRIKLTNFKDYDTMYYNNLLTIPILLVASILVEDWSSANIQKNFPPEQRNTVIMVMVISGMSTVFISYTSAWAVRVTSSTTYSMVGALNKLPIAISGLVFFDAPVTFGSVSAIFVGFVSGIVYAVAKVRQNSKPKTVLPTTNIPLSASSRSMQDSLKA.

Basic and acidic residues predominate over residues 1–12; sequence MSDDKKSDDYRV. Positions 1 to 28 are disordered; it reads MSDDKKSDDYRVDMPSSRTSRAPSPIMR. Over 1-36 the chain is Cytoplasmic; it reads MSDDKKSDDYRVDMPSSRTSRAPSPIMRPALKSAPS. Residues 37-57 form a helical membrane-spanning segment; the sequence is LTENPMAAVLAYCASSILMTV. The Lumenal segment spans residues 58–67; sequence TNKYVLSGVD. The helical transmembrane segment at 68–88 threads the bilayer; that stretch reads FNLNFFLLCVQSVVCVTAISI. Topologically, residues 89–107 are cytoplasmic; it reads CKAAGLITYRDFNTDEAKK. Residues 108–126 form a helical membrane-spanning segment; the sequence is WFPISLLLIGMIYTGTWAL. Residues 127 to 130 lie on the Lumenal side of the membrane; sequence KYLS. The chain crosses the membrane as a helical span at residues 131 to 153; sequence IPVYTIFKNLTIILIAYGEVLWF. Residues 154-161 lie on the Cytoplasmic side of the membrane; sequence GGSVTPMT. Residues 162 to 184 form a helical membrane-spanning segment; that stretch reads LFSFGLMVLSSIIAAWADIQHAL. Residues 185–199 are Lumenal-facing; it reads NSFGQQSEAANEALS. Residues 200–220 form a helical membrane-spanning segment; that stretch reads TMHAGYLWMAFNCVCSATYLL. Residues 221-242 are Cytoplasmic-facing; the sequence is SMRKRIKLTNFKDYDTMYYNNL. A helical transmembrane segment spans residues 243–263; that stretch reads LTIPILLVASILVEDWSSANI. The Lumenal segment spans residues 264–274; the sequence is QKNFPPEQRNT. Residues 275 to 295 traverse the membrane as a helical segment; sequence VIMVMVISGMSTVFISYTSAW. Topologically, residues 296-303 are cytoplasmic; the sequence is AVRVTSST. Residues 304–324 traverse the membrane as a helical segment; that stretch reads TYSMVGALNKLPIAISGLVFF. The Lumenal portion of the chain corresponds to 325 to 327; that stretch reads DAP. The chain crosses the membrane as a helical span at residues 328–348; it reads VTFGSVSAIFVGFVSGIVYAV. The Cytoplasmic portion of the chain corresponds to 349-381; sequence AKVRQNSKPKTVLPTTNIPLSASSRSMQDSLKA.

This sequence belongs to the TPT transporter family. SLC35D subfamily. As to quaternary structure, homooligomer.

It localises to the golgi apparatus membrane. Its subcellular location is the cytoplasmic vesicle membrane. It is found in the endoplasmic reticulum membrane. In terms of biological role, involved in the import of GDP-mannose from the cytoplasm into the Golgi lumen. The polypeptide is GDP-mannose transporter (VRG4) (Phaeosphaeria nodorum (strain SN15 / ATCC MYA-4574 / FGSC 10173) (Glume blotch fungus)).